We begin with the raw amino-acid sequence, 719 residues long: Developmental regulator flbA (719 aa).

A compositionally biased stretch (polar residues) spans 1-17 (MPTSISTAPLSQGSPPS). 3 disordered regions span residues 1 to 39 (MPTS…STAA), 117 to 141 (IGST…SRKA), and 155 to 190 (LSPP…AAER). Low complexity-rich tracts occupy residues 123–135 (SSLR…GSLQ) and 158–171 (PLSD…QSSS). The interval 214 to 411 (QTSSRLLRMT…QDGPNVKSSV (198 aa)) is fungal-DR. Residues 425–511 (GLVGVKMARE…SKNAIYAITE (87 aa)) enclose the DEP domain. The 146-residue stretch at 540–685 (SNNARLNHIL…FLRDPKYSAI (146 aa)) folds into the RGS domain. A disordered region spans residues 694–719 (LIGGGRSYSPTPGNVPERSMSRSQRS).

In terms of biological role, required for asexual sporulation and normal colony development. May be involved in brlA activation. Could play a regulatory role in controlling the flug-initiated signal transduction pathway that triggers the asexual reproduction. This chain is Developmental regulator flbA (flbA), found in Emericella nidulans (strain FGSC A4 / ATCC 38163 / CBS 112.46 / NRRL 194 / M139) (Aspergillus nidulans).